We begin with the raw amino-acid sequence, 294 residues long: Lipoyl synthase (294 aa).

7 residues coordinate [4Fe-4S] cluster: C35, C40, C46, C61, C65, C68, and S273. Residues F47 to E262 enclose the Radical SAM core domain.

Belongs to the radical SAM superfamily. Lipoyl synthase family. The cofactor is [4Fe-4S] cluster.

The protein resides in the cytoplasm. The enzyme catalyses [[Fe-S] cluster scaffold protein carrying a second [4Fe-4S](2+) cluster] + N(6)-octanoyl-L-lysyl-[protein] + 2 oxidized [2Fe-2S]-[ferredoxin] + 2 S-adenosyl-L-methionine + 4 H(+) = [[Fe-S] cluster scaffold protein] + N(6)-[(R)-dihydrolipoyl]-L-lysyl-[protein] + 4 Fe(3+) + 2 hydrogen sulfide + 2 5'-deoxyadenosine + 2 L-methionine + 2 reduced [2Fe-2S]-[ferredoxin]. It participates in protein modification; protein lipoylation via endogenous pathway; protein N(6)-(lipoyl)lysine from octanoyl-[acyl-carrier-protein]: step 2/2. Its function is as follows. Catalyzes the radical-mediated insertion of two sulfur atoms into the C-6 and C-8 positions of the octanoyl moiety bound to the lipoyl domains of lipoate-dependent enzymes, thereby converting the octanoylated domains into lipoylated derivatives. The chain is Lipoyl synthase from Geotalea daltonii (strain DSM 22248 / JCM 15807 / FRC-32) (Geobacter daltonii).